Consider the following 313-residue polypeptide: Beta-lactamase BRO-1 (313 aa).

The signal sequence occupies residues 1-25; it reads MQRRHFLQKTLLALPIIFSGNLLTG. The N-palmitoyl cysteine moiety is linked to residue C26. C26 carries the S-diacylglycerol cysteine lipid modification. S90 acts as the Acyl-ester intermediate in catalysis. 255–257 lines the substrate pocket; that stretch reads KTG.

This sequence belongs to the class-A beta-lactamase family.

It localises to the cell membrane. The enzyme catalyses a beta-lactam + H2O = a substituted beta-amino acid. In Moraxella catarrhalis (Branhamella catarrhalis), this protein is Beta-lactamase BRO-1 (bla).